The following is a 162-amino-acid chain: UPF0260 protein Atu0932 (162 aa).

The protein belongs to the UPF0260 family.

This is UPF0260 protein Atu0932 from Agrobacterium fabrum (strain C58 / ATCC 33970) (Agrobacterium tumefaciens (strain C58)).